Reading from the N-terminus, the 312-residue chain is Undecaprenyl-diphosphatase (312 aa).

7 consecutive transmembrane segments (helical) span residues 74–94, 122–142, 154–174, 183–203, 226–246, 254–274, and 288–308; these read GVAF…WYFW, VSIG…KVFI, VAIA…ERIG, LDIR…IPGV, FSFL…LKTL, VGLV…YIAI, and IFIW…ISGV.

It belongs to the UppP family.

The protein resides in the cell inner membrane. The enzyme catalyses di-trans,octa-cis-undecaprenyl diphosphate + H2O = di-trans,octa-cis-undecaprenyl phosphate + phosphate + H(+). Functionally, catalyzes the dephosphorylation of undecaprenyl diphosphate (UPP). Confers resistance to bacitracin. This is Undecaprenyl-diphosphatase from Trichodesmium erythraeum (strain IMS101).